The sequence spans 616 residues: E3 ubiquitin-protein ligase DTX4 (616 aa).

WWE domains are found at residues 1–78 (MLLA…PVRR) and 79–155 (NYYD…RVRR). 2 disordered regions span residues 223–254 (VGKL…PSQV) and 355–387 (PPPV…GKTP). Residues 375 to 384 (KTTKKQAKKG) are compositionally biased toward basic residues. Residues 406–465 (CTICMERLTAPSGYKGPQPTVKPDLVGKLSRCGHIYHIYCLVAMYNNGNKDGSLQCPTCK) form an RING-type; atypical zinc finger.

The protein belongs to the Deltex family. Interacts with NLRP4. Expressed in brain, testis, embryonic fibroblasts and thymocytes.

The protein localises to the cytoplasm. It carries out the reaction S-ubiquitinyl-[E2 ubiquitin-conjugating enzyme]-L-cysteine + [acceptor protein]-L-lysine = [E2 ubiquitin-conjugating enzyme]-L-cysteine + N(6)-ubiquitinyl-[acceptor protein]-L-lysine.. It functions in the pathway protein modification; protein ubiquitination. In terms of biological role, functions as a ubiquitin ligase protein in vivo, mediating 'Lys48'-linked polyubiquitination and promoting degradation of TBK1, targeting to TBK1 requires interaction with NLRP4. Regulator of Notch signaling, a signaling pathway involved in cell-cell communications that regulates a broad spectrum of cell-fate determinations. The protein is E3 ubiquitin-protein ligase DTX4 (Dtx4) of Mus musculus (Mouse).